The following is a 179-amino-acid chain: ADP-ribosylation factor 1-like 1 (179 aa).

A lipid anchor (N-myristoyl glycine) is attached at Gly2. The tract at residues 3-16 is important for the stable binding to the membranes; it reads LFFSKISSFMFPNI. GTP-binding positions include 24 to 32, 126 to 129, and Ala160; these read GLDGAGKTT and NKQD.

The protein belongs to the small GTPase superfamily. Arf family.

It is found in the golgi apparatus membrane. It carries out the reaction GTP + H2O = GDP + phosphate + H(+). Its activity is regulated as follows. Alternates between an inactive GDP-bound form and an active GTP-bound form. Activated by a guanine nucleotide-exchange factor (GEF) and inactivated by GTPase-activating protein (GAP). Its function is as follows. Small GTPase involved in protein trafficking between different compartments. Modulates vesicle budding and uncoating within the Golgi complex. In its GTP-bound form, triggers the recruitment of coatomer proteins to the Golgi membrane. The hydrolysis of ARF1-bound GTP, which is mediated by ARFGAPs proteins, is required for dissociation of coat proteins from Golgi membranes and vesicles. The protein is ADP-ribosylation factor 1-like 1 (arf-1.1) of Caenorhabditis elegans.